Reading from the N-terminus, the 101-residue chain is Small ribosomal subunit protein uS14 (101 aa).

It belongs to the universal ribosomal protein uS14 family. In terms of assembly, part of the 30S ribosomal subunit. Contacts proteins S3 and S10.

Binds 16S rRNA, required for the assembly of 30S particles and may also be responsible for determining the conformation of the 16S rRNA at the A site. The polypeptide is Small ribosomal subunit protein uS14 (Acinetobacter baumannii (strain SDF)).